The chain runs to 153 residues: Pheromone-binding protein Gp-9 (153 aa).

Positions 1–19 (MKTLILHICIFALVAFASA) are cleaved as a signal peptide. 3 cysteine pairs are disulfide-bonded: Cys37–Cys77, Cys73–Cys129, and Cys118–Cys138.

This sequence belongs to the PBP/GOBP family. In terms of assembly, homodimer.

The protein localises to the secreted. Its function is as follows. Colony queen number, a major feature of social organization, is associated with worker genotype for Gp-9. Colonies are headed by either a single reproductive queen (monogyne form) or multiple queens (polygyne form). Differences in worker Gp-9 genotypes between social forms may cause differences in workers' abilities to recognize queens and regulate their numbers. This is Pheromone-binding protein Gp-9 from Solenopsis nigella gensterblumi (Fire ant).